A 416-amino-acid chain; its full sequence is Peptide chain release factor subunit 1 (416 aa).

It belongs to the eukaryotic release factor 1 family. In terms of assembly, heterodimer of two subunits, one of which binds GTP.

It localises to the cytoplasm. In terms of biological role, directs the termination of nascent peptide synthesis (translation) in response to the termination codons UAA, UAG and UGA. The sequence is that of Peptide chain release factor subunit 1 from Halobacterium salinarum (strain ATCC 29341 / DSM 671 / R1).